Here is a 450-residue protein sequence, read N- to C-terminus: Benzene 1,2-dioxygenase subunit alpha (450 aa).

The Rieske domain maps to 56–163; it reads LLGHETHIRK…VETYKGLIFA (108 aa). Positions 96, 98, 116, and 119 each coordinate [2Fe-2S] cluster. Positions 222 and 228 each coordinate Fe cation.

The protein belongs to the bacterial ring-hydroxylating dioxygenase alpha subunit family. This dioxygenase system consists of four proteins: the two subunits of the hydroxylase component (BedC1 and BedC2), a ferredoxin (BedB) and a ferredoxin reductase (BedA). [2Fe-2S] cluster is required as a cofactor. The cofactor is Fe cation.

The enzyme catalyses benzene + NADH + O2 + H(+) = cis-1,2-dihydrobenzene-1,2-diol + NAD(+). It participates in aromatic compound metabolism; benzene degradation; catechol from benzene: step 1/2. This Pseudomonas putida (Arthrobacter siderocapsulatus) protein is Benzene 1,2-dioxygenase subunit alpha (bedC1).